The following is a 94-amino-acid chain: Co-chaperonin GroES (94 aa).

Belongs to the GroES chaperonin family. In terms of assembly, heptamer of 7 subunits arranged in a ring. Interacts with the chaperonin GroEL.

The protein resides in the cytoplasm. In terms of biological role, together with the chaperonin GroEL, plays an essential role in assisting protein folding. The GroEL-GroES system forms a nano-cage that allows encapsulation of the non-native substrate proteins and provides a physical environment optimized to promote and accelerate protein folding. GroES binds to the apical surface of the GroEL ring, thereby capping the opening of the GroEL channel. This Staphylococcus carnosus (strain TM300) protein is Co-chaperonin GroES.